The sequence spans 314 residues: MNMVWTEISCEVPAAMVDLLADFLVELSGNGVSIENLSLDTFSLDTIEDSPLKTVKAYFAVDNALEAHLDAVGAFLSANGPDFAGFVFKNPAVNAIDAEDWANNWKKYFKPVRIGSRLVIKPTWEEYSASPGDLILKLDPGMAFGTGGHPTTKMCLEALEHIFLAEGAFKGVAPVAPVTVLDVGTGSGVLSIGAAKLGAERITAIDIDADAVVVAGENVALNECSDVVELSTTPLQELTGNFDLVLANILAEELVRLAAELAVKVAPAGFLVLSGILSEKENFVLDGFSPYGLKLIEIRREGEWSCISLYLEPR.

Positions 152, 184, 206, and 248 each coordinate S-adenosyl-L-methionine.

This sequence belongs to the methyltransferase superfamily. PrmA family.

The protein localises to the cytoplasm. It catalyses the reaction L-lysyl-[protein] + 3 S-adenosyl-L-methionine = N(6),N(6),N(6)-trimethyl-L-lysyl-[protein] + 3 S-adenosyl-L-homocysteine + 3 H(+). Methylates ribosomal protein L11. In Geotalea daltonii (strain DSM 22248 / JCM 15807 / FRC-32) (Geobacter daltonii), this protein is Ribosomal protein L11 methyltransferase.